Consider the following 312-residue polypeptide: Taste receptor type 2 member 7 (312 aa).

The Extracellular segment spans residues 1–9 (MTYETDTTL). Residues 10 to 30 (MLVAVGEALVGILGNAFIALV) traverse the membrane as a helical segment. Residues 31–49 (NFMGWMKNRKIASIDLILS) are Cytoplasmic-facing. Residues 50–70 (SVAMSRICLQCIILLDCIILV) traverse the membrane as a helical segment. At 71–101 (QYPDTYNRGKEMRTVDFFWTLTNHLSVWFAT) the chain is on the extracellular side. A helical membrane pass occupies residues 102–122 (CLSIFYLFKIANFFHPLFLWI). Residues 123–128 (KWRIDK) are Cytoplasmic-facing. The helical transmembrane segment at 129–149 (LILRTLLACVIISLCFSLPVT) threads the bilayer. Over 150 to 187 (ENLSDDFRRCVKTKERINSTLRCKVNKAGHASVKVNLN) the chain is Extracellular. N-linked (GlcNAc...) asparagine glycosylation is found at Asn151 and Asn167. A helical membrane pass occupies residues 188–208 (LVMLFPFSVSLVSFLLLILSL). Over 209-235 (WRHTRQIQLSVTGYKDPSTTAHVKAMK) the chain is Cytoplasmic. A helical membrane pass occupies residues 236–256 (AVISFLALFVVYCLAFLIATS). The Extracellular segment spans residues 257-266 (SYFMPESELA). Residues 267–287 (VIWGELIALIYPSSHSFILIL) form a helical membrane-spanning segment. At 288 to 312 (GSSKLKQASVRVLCRVKTMLKGKKY) the chain is on the cytoplasmic side.

Belongs to the G-protein coupled receptor T2R family. Expressed in subsets of taste receptor cells of the tongue and palate epithelium and exclusively in gustducin-positive cells. Expressed in 15% taste bud cells in circumvallate and foliate papillae but only in 2% in fungiform papillae. Expressed in gastric and duodenal tissues.

It is found in the membrane. Gustducin-coupled receptor implicated in the perception of bitter compounds in the oral cavity and the gastrointestinal tract. Signals through PLCB2 and the calcium-regulated cation channel TRPM5. The polypeptide is Taste receptor type 2 member 7 (Tas2r7) (Mus musculus (Mouse)).